The chain runs to 356 residues: Solute carrier family 25 member 3 (356 aa).

Residues 1–44 constitute a mitochondrion transit peptide; that stretch reads MFSSVAHLARANPFNAPHLQLVHDVSGPRSPPGPPRRSRHLAAA. Residues 45–57 lie on the Mitochondrial intermembrane side of the membrane; it reads AVEGYSCEFGSMK. 3 Solcar repeats span residues 57 to 141, 154 to 238, and 255 to 333; these read KYYA…FKAL, WRTS…TVEA, and EQLV…VKVY. A helical transmembrane segment spans residues 58-80; sequence YYALCGFGGVLSCGLTHTAVVPL. The Mitochondrial matrix segment spans residues 81–115; it reads DLVKCRMQVDPQKYKGIFNGFSITLKEDGVRGLAK. N6-acetyllysine is present on K93. At K106 the chain carries N6-methyllysine. A helical membrane pass occupies residues 116–135; that stretch reads GWAPTLIGYSMQGLCKFGFY. The Mitochondrial intermembrane segment spans residues 136 to 155; the sequence is EVFKALYSNILGEENTYLWR. A helical transmembrane segment spans residues 156–177; that stretch reads TSLYLAASASAEFFADIALAPM. Over 178 to 212 the chain is Mitochondrial matrix; that stretch reads EAAKVRIQTQPGYANTLREAVPKMYKEEGLNAFYK. At Y190 the chain carries Phosphotyrosine. K203 carries the post-translational modification N6-acetyllysine. A helical membrane pass occupies residues 213–232; that stretch reads GVAPVWMRQIPYTMMKFACF. The Mitochondrial intermembrane portion of the chain corresponds to 233-255; that stretch reads ERTVEALYKFVVPKPRSECTKAE. Residues 256–278 traverse the membrane as a helical segment; that stretch reads QLVVTFVAGYIAGVFCAIVSHPA. Residues 279 to 308 are Mitochondrial matrix-facing; it reads DSVVSVLNKEKGSTASQVLQRLGFRGVWKG. A helical membrane pass occupies residues 309–327; sequence LFARIIMIGTLTALQWFIY. The Mitochondrial intermembrane portion of the chain corresponds to 328–356; the sequence is DSVKVYFRLPRPPPPEMPESLKKKLGLTE.

This sequence belongs to the mitochondrial carrier (TC 2.A.29) family. In terms of assembly, interacts with PPIF; the interaction is impaired by CsA.

Its subcellular location is the mitochondrion inner membrane. The catalysed reaction is phosphate(in) + H(+)(in) = phosphate(out) + H(+)(out). Its function is as follows. Inorganic ion transporter that transports phosphate or copper ions across the mitochondrial inner membrane into the matrix compartment. Mediates proton-coupled symport of phosphate ions necessary for mitochondrial oxidative phosphorylation of ADP to ATP. Transports copper ions probably in the form of anionic copper(I) complexes to maintain mitochondrial matrix copper pool and to supply copper for cytochrome C oxidase complex assembly. May also play a role in regulation of the mitochondrial permeability transition pore (mPTP). This chain is Solute carrier family 25 member 3, found in Rattus norvegicus (Rat).